An 89-amino-acid chain; its full sequence is Small ribosomal subunit protein uS15 (89 aa).

This sequence belongs to the universal ribosomal protein uS15 family. In terms of assembly, part of the 30S ribosomal subunit. Forms a bridge to the 50S subunit in the 70S ribosome, contacting the 23S rRNA.

Functionally, one of the primary rRNA binding proteins, it binds directly to 16S rRNA where it helps nucleate assembly of the platform of the 30S subunit by binding and bridging several RNA helices of the 16S rRNA. Its function is as follows. Forms an intersubunit bridge (bridge B4) with the 23S rRNA of the 50S subunit in the ribosome. The chain is Small ribosomal subunit protein uS15 from Aeromonas hydrophila subsp. hydrophila (strain ATCC 7966 / DSM 30187 / BCRC 13018 / CCUG 14551 / JCM 1027 / KCTC 2358 / NCIMB 9240 / NCTC 8049).